The following is a 409-amino-acid chain: AT-rich interactive domain-containing protein 3C (409 aa).

Residues 1 to 14 (MEALQRQQAARLAQ) show a composition bias toward low complexity. The segment at 1 to 91 (MEALQRQQAA…SPSSQSPGIQ (91 aa)) is disordered. Positions 19–30 (LAPPRLPLPQPP) are enriched in pro residues. A compositionally biased stretch (acidic residues) spans 49–70 (AEEEEGAEDEEGETPLAEEETA). The ARID domain maps to 110-202 (DPKRKEFLDD…YLYPYECETR (93 aa)). Disordered stretches follow at residues 233 to 274 (NLAG…PAHA), 306 to 333 (TREK…RLGA), and 385 to 409 (PVPA…STLP). Residues 235–257 (AGPTPRGAPGPASSHGPAPTATP) show a composition bias toward low complexity. Positions 301–386 (LASEATREKL…GILFARRQPV (86 aa)) constitute an REKLES domain. Residues 306-320 (TREKLAPEEPPEKRA) show a composition bias toward basic and acidic residues. Positions 393–402 (TNPPPLPSTG) are enriched in pro residues.

In terms of assembly, interacts (via REKLES DOMAIN) with NPM1; the interaction mediates ARID3C nuclear shuttling.

Its subcellular location is the nucleus. Functionally, transcription factor involved in monocyte-to-macrophage differentiation. Forms a complex with NPM1 to translocate to the nucleus, acting as a transcription factor that promotes the expression of the genes involved in macrophage differentiation, such as STAT3, STAT1 and JUNB. This Mus musculus (Mouse) protein is AT-rich interactive domain-containing protein 3C (Arid3c).